The chain runs to 329 residues: Beta-tectorin (329 aa).

The signal sequence occupies residues 1–17 (MVAVTVYLMVILAQAFA). The ZP domain maps to 19–287 (PCTPNKADVI…VTCDKRKQRM (269 aa)). N-linked (GlcNAc...) asparagine glycans are attached at residues Asn80, Asn104, Asn116, and Asn145. Cys204 and Cys264 are oxidised to a cystine. Gly304 carries GPI-anchor amidated glycine lipidation. Residues 305–329 (LSRFYMLSDVIFHLLFAIGFCAILL) constitute a propeptide, removed in mature form.

As to quaternary structure, may form homomeric filament after self-association or heteromeric filament after association with alpha-tectorin. The N-terminus is blocked. Post-translationally, N-glycosylated. In terms of processing, the presence of a hydrophobic C-terminus preceded by a potential cleavage site strongly suggests that tectorins are synthesized as glycosylphosphatidylinositol-linked, membrane-bound precursors. Tectorins are targeted to the apical surface of the inner ear epithelia by the lipid and proteolytically released into the extracellular compartment. As to expression, exclusively expressed in the inner ear, where it is found in basilar papilla, clear cells, supporting cells, cuboidal cells and the lagena macula.

Its subcellular location is the cell membrane. It is found in the secreted. The protein resides in the extracellular space. It localises to the extracellular matrix. Functionally, one of the major non-collagenous components of the tectorial membrane. The tectorial membrane is an extracellular matrix of the inner ear that covers the neuroepithelium of the cochlea and contacts the stereocilia bundles of specialized sensory hair cells. Sound induces movement of these hair cells relative to the tectorial membrane, deflects the stereocilia and leads to fluctuations in hair-cell membrane potential, transducing sound into electrical signals. The polypeptide is Beta-tectorin (TECTB) (Gallus gallus (Chicken)).